A 414-amino-acid polypeptide reads, in one-letter code: Dihydroorotase (414 aa).

Zn(2+)-binding residues include histidine 57 and histidine 59. Residues 59 to 61 (HLR) and asparagine 91 contribute to the substrate site. Residues lysine 135, histidine 164, histidine 204, and aspartate 272 each coordinate Zn(2+). Lysine 135 is modified (N6-carboxylysine). Aspartate 272 is a catalytic residue. Substrate-binding positions include histidine 276 and 286–287 (AG).

It belongs to the metallo-dependent hydrolases superfamily. DHOase family. Class I DHOase subfamily. It depends on Zn(2+) as a cofactor.

It carries out the reaction (S)-dihydroorotate + H2O = N-carbamoyl-L-aspartate + H(+). It participates in pyrimidine metabolism; UMP biosynthesis via de novo pathway; (S)-dihydroorotate from bicarbonate: step 3/3. Functionally, catalyzes the reversible cyclization of carbamoyl aspartate to dihydroorotate. The chain is Dihydroorotase from Pyrococcus furiosus (strain ATCC 43587 / DSM 3638 / JCM 8422 / Vc1).